Consider the following 2562-residue polypeptide: Zinc finger homeobox protein 2 (2562 aa).

A compositionally biased stretch (polar residues) spans 1 to 13; that stretch reads MATLNSASPSGTV. Disordered stretches follow at residues 1 to 88 and 337 to 410; these read MATL…PPKD and PSPP…DPPP. A compositionally biased stretch (basic and acidic residues) spans 56–73; that stretch reads GGERLESGSDLDPPKEIG. 2 consecutive C2H2-type zinc fingers follow at residues 446 to 469 and 501 to 525; these read LKCP…REKH and YRCD…SDKH. Disordered regions lie at residues 530–559, 603–651, and 669–705; these read QGFQ…EPKT, PPGL…PDKP, and RKFP…PSPD. Residues 609 to 622 are compositionally biased toward pro residues; that stretch reads PGPPPPPGAAPTNP. Residues 690–704 show a composition bias toward polar residues; that stretch reads LLGSSSDGLPTSPSP. C2H2-type zinc fingers lie at residues 752 to 776, 815 to 839, and 864 to 888; these read HRCK…TDKH, LRCN…GSAH, and YHCL…TPAH. The disordered stretch occupies residues 923–966; that stretch reads RLQTPGKASDTPLAQPPTSEKDAQNKTEQQASEVTEDRSGPPRD. The segment at 1003 to 1026 adopts a C2H2-type 6 zinc-finger fold; the sequence is YRCPLCQEQLVGRPALHFHLSHLH. Disordered regions lie at residues 1058–1126 and 1140–1166; these read NPVE…PAPR and MSEE…HPLT. 2 stretches are compositionally biased toward pro residues: residues 1091-1101 and 1114-1124; these read SPDPPLEPPLA and DQPPSPAPSPA. C2H2-type zinc fingers lie at residues 1185–1211 and 1242–1266; these read YKCT…SHLH and FKCT…SVLH. The span at 1278–1305 shows a compositional bias: basic and acidic residues; it reads RAEGAERGQEEFKEGETEGEAGTEKKGP. Residues 1278-1313 are disordered; sequence RAEGAERGQEEFKEGETEGEAGTEKKGPDPGGFMSG. The segment at 1474–1497 adopts a C2H2-type 9 zinc-finger fold; the sequence is LACGACGKLFSNMLILKTHEEHVH. The disordered stretch occupies residues 1520-1584; it reads LYPPPVEPPK…EGSRGSLPPA (65 aa). Residues 1521–1531 are compositionally biased toward pro residues; the sequence is YPPPVEPPKPP. Residues 1589 to 1648 constitute a DNA-binding region (homeobox 1); that stretch reads RRFSRTKFTEFQTQALQSFFETSAYPKDGEVERLASLLGLASRVVVVWFQNARQKARKNA. The C2H2-type 10; degenerate zinc finger occupies 1664–1687; sequence SGCRRCHATFACVFELVRHLKKCY. The segment at 1689 to 1760 is disordered; that stretch reads DQPPEEEEEA…EGKAPPSPPV (72 aa). Residues 1690 to 1713 are compositionally biased toward acidic residues; that stretch reads QPPEEEEEAERGEEEEEVEEEEAE. Positions 1743-1752 are enriched in basic and acidic residues; the sequence is TRPESKESEG. The C2H2-type 11 zinc finger occupies 1761-1783; the sequence is YACDQCAASFPSQDLLTTHHRLH. 7 disordered regions span residues 1814 to 1853, 1907 to 1934, 1971 to 2057, 2114 to 2136, 2186 to 2210, 2263 to 2313, and 2391 to 2429; these read SGTS…KDKR, RKGQ…PAPF, PLPF…DSMG, KKAK…TSAA, PAPE…PLGA, QTAG…PNSS, and LQQP…LTGS. A DNA-binding region (homeobox 2) is located at residues 1851–1910; it reads DKRLRTTILPEQLEILYRWYMQDSNPTRKMLDCISEEVGLKKRVVQVWFQNTRARERKGQ. The span at 1985 to 1996 shows a compositional bias: pro residues; it reads TPEPPPPLPPPA. Positions 2008–2037 are enriched in low complexity; the sequence is KASPESEACSPSAGDLSDSSASSLAEPESP. Residues 2038–2051 show a composition bias toward gly residues; it reads GAGGTSGGPGGGTG. A DNA-binding region (homeobox 3) is located at residues 2058-2117; sequence QRRYRTQMSSLQLKIMKACYEAYRTPTMQECEVLGEEIGLPKRVIQVWFQNARAKEKKAK. The segment covering 2188–2200 has biased composition (pro residues); the sequence is PETPLAPKGPPAT. Residues 2275-2286 are compositionally biased toward polar residues; it reads PVSNQTNSSTDP. The span at 2295–2305 shows a compositional bias: basic and acidic residues; sequence SGDKVSGERKP. A compositionally biased stretch (pro residues) spans 2395-2411; the sequence is PQAPEPTATAPPKPPEL. A C2H2-type 12; degenerate zinc finger spans residues 2441 to 2461; that stretch reads YLCRQCKMAFDGEAPATAHQR. The segment at 2485–2509 adopts a C2H2-type 13 zinc-finger fold; it reads YHCLACEVLLSGREALASHLRSSAH. 2 disordered regions span residues 2506-2525 and 2540-2562; these read SSAH…ITVT and EEAR…LLAL. Low complexity predominate over residues 2553 to 2562; the sequence is TTTTSTLLAL.

As to expression, expressed in brain (at protein level). Expressed at the highest levels in the pyramidal cell layer of the hippocampus, the suprachiasmatic nucleus, laterodorsal thalamic nucleus, lateral geniculate nucleus, substantia nigra pars compacta, and magnocellular part of the red nucleus (at protein level). Highly expressed in dorsal root ganglia. Expressed at lower levels in kidney, stomach, liver, heart and testis.

The protein resides in the nucleus. Functionally, transcriptional regulator that is critical for the regulation of pain perception and processing of noxious stimuli. The sequence is that of Zinc finger homeobox protein 2 from Mus musculus (Mouse).